The following is a 194-amino-acid chain: 4'-phosphooxetanocin A phosphatase (194 aa).

4'-phosphooxetanocin A-binding residues include R16 and W17. Oxetanocin A is bound at residue W17. Residues H31, H66, and D67 each contribute to the Mg(2+) site. Residues H75, S78, and K81 each contribute to the 4'-phosphooxetanocin A site. Oxetanocin A-binding residues include H75 and S78. D132 contacts Mg(2+).

It belongs to the 5DNU family. As to quaternary structure, homodimer. Mg(2+) is required as a cofactor. Co(2+) serves as cofactor. Requires Mn(2+) as cofactor.

It catalyses the reaction 4'-phosphooxetanocin A + H2O = oxetanocin A + phosphate. Its function is as follows. Phosphohydrolase involved in the biosynthesis of oxetanocin A (OXT-A), a nucleoside analog with antitumor, antiviral and antibacterial properties. Catalyzes the hydrolysis of phosphooxetanocin A (OXT-A-P) to generate oxetanocin A (OXT-A) and a molecule of inorganic phosphate. Can also bind and hydrolyze OXT triphosphate (OXT-A-PPP) and OXT diphosphate (OXT-A-PP), and thus catalyze the sequential hydrolysis of tri-, di- and mono-phosphorylated oxetanocin A compounds, releasing one molecule of inorganic phosphate at a time. In vitro can also use dATP, dAMP and dADP. In Priestia megaterium (Bacillus megaterium), this protein is 4'-phosphooxetanocin A phosphatase.